We begin with the raw amino-acid sequence, 577 residues long: Suppressor of tumorigenicity 7 protein (577 aa).

Residues 15–35 (CIVWSWTYLWTVWFFLVLFLV) traverse the membrane as a helical segment. Residue asparagine 47 is glycosylated (N-linked (GlcNAc...) asparagine). The helical transmembrane segment at 62–82 (FYVALTGTSSLISGLILIFEW) threads the bilayer. Residue serine 386 is modified to Phosphoserine. Helical transmembrane passes span 512-532 (LPFFILFTAGLCSFTAMLALL) and 539-559 (LMGVFAKAFLSTLFAPLNFVM).

It belongs to the ST7 family.

The protein resides in the membrane. This Rattus norvegicus (Rat) protein is Suppressor of tumorigenicity 7 protein (St7).